A 541-amino-acid polypeptide reads, in one-letter code: Nuclear receptor subfamily 5 group A member 2 (541 aa).

Over residues 1 to 10 (MSSNSDTGDL) the composition is skewed to polar residues. The disordered stretch occupies residues 1–35 (MSSNSDTGDLQESLKHGLTPIGAGLPDRHGSPIPA). Residues 83–154 (EELCPVCGDK…KCLSVGMKLE (72 aa)) constitute a DNA-binding region (nuclear receptor). Zn(2+) contacts are provided by cysteine 86, cysteine 89, cysteine 103, cysteine 106, cysteine 122, cysteine 128, cysteine 138, and cysteine 141. 2 NR C4-type zinc fingers span residues 86–106 (CPVCGDKVSGYHYGLLTCESC) and 122–146 (CIENQNCQIDKTQRKRCPYCRFQKC). The tract at residues 152 to 167 (KLEAVRADRMRGGRNK) is C-terminal extension (CTE). An FTZ-F1 box motif is present at residues 168-187 (FGPMYKRDRALKQQKKALIR). Lysine 270 is covalently cross-linked (Glycyl lysine isopeptide (Lys-Gly) (interchain with G-Cter in SUMO1)). Residues 300–539 (SIPHLILELL…NLLIEMLHAK (240 aa)) form the NR LBD domain. Residues 421–424 (GATL), tyrosine 516, and lysine 520 contribute to the a phospholipid derivative site. The tract at residues 528–539 (YNNLLIEMLHAK) is AF-2.

The protein belongs to the nuclear hormone receptor family. NR5 subfamily. In terms of assembly, monomer; Binds DNA as a monomer. Interacts with nuclear receptor corepressors NR0B1 and NR0B2; repressing NR5A2 nuclear receptor activity. Interacts with nuclear receptor coactivators CTNNB1, PPARGC1A and NCOA2; interaction takes place following ligand-binding and promotes target gene activation. Interacts (when sumoylated) with GPS2; interaction with GPS2 onto hepatic acute phase protein promoters prevents N-Cor corepressor complex dissociation. Interacts with HNF1A. Interacts with GRIP1. Sumoylated by SUMO1 at Lys-270 during the hepatic acute phase response, leading to promote interaction with GPS2 and prevent N-Cor corepressor complex dissociation. Abundantly expressed in pancreas, less in liver, very low levels in heart and lung. Expressed in the Hep-G2 cell line. Isoform 1 and isoform 2 seem to be present in fetal and adult liver and Hep-G2 cells.

The protein resides in the nucleus. It is found in the chromosome. Its activity is regulated as follows. Activated by synthetic agonists RR-RJW100, SR-RJW100, endo sulfamide compound 6N and GSK8470. In terms of biological role, orphan nuclear receptor that binds DNA as a monomer to the 5'-TCAAGGCCA-3' sequence and controls expression of target genes: regulates key biological processes, such as early embryonic development, cholesterol and bile acid synthesis pathways, as well as liver and pancreas morphogenesis. Ligand-binding causes conformational change which causes recruitment of coactivators, promoting target gene activation. The specific ligand is unknown, but specific phospholipids, such as phosphatidylethanolamine, phosphatidylserine, dilauroyl phosphatidylcholine and diundecanoyl phosphatidylcholine can act as ligand in vitro. Acts as a pioneer transcription factor, which unwraps target DNA from histones and elicits local opening of closed chromatin. Plays a central role during preimplantation stages of embryonic development. Plays a minor role in zygotic genome activation (ZGA) by regulating a small set of two-cell stage genes. Plays a major role in morula development (2-16 cells embryos) by acting as a master regulator at the 8-cell stage, controlling expression of lineage-specifying transcription factors and genes involved in mitosis, telomere maintenance and DNA repair. Zygotic NR5A2 binds to both closed and open chromatin with other transcription factors, often at SINE B1/Alu repeats DNA elements, promoting chromatin accessibility at nearby regulatory regions. Also involved in the epiblast stage of development and embryonic stem cell pluripotency, by promoting expression of POU5F1/OCT4. Regulates other processes later in development, such as formation of connective tissue in lower jaw and middle ear, neural stem cell differentiation, ovarian follicle development and Sertoli cell differentiation. Involved in exocrine pancreas development and acinar cell differentiation. Acts as an essential transcriptional regulator of lipid metabolism. Key regulator of cholesterol 7-alpha-hydroxylase gene (CYP7A) expression in liver. Also acts as a negative regulator of inflammation in different organs, such as, liver and pancreas. Protects against intestinal inflammation via its ability to regulate glucocorticoid production. Plays an anti-inflammatory role during the hepatic acute phase response by acting as a corepressor: inhibits the hepatic acute phase response by preventing dissociation of the N-Cor corepressor complex. Acts as a regulator of immunity by promoting lymphocyte T-cell development, proliferation and effector functions. Also involved in resolution of endoplasmic reticulum stress in the liver. In constrast to isoform 1 and isoform 2, does not induce cholesterol 7-alpha-hydroxylase gene (CYP7A) promoter activity. Functionally, (Microbial infection) Plays a crucial role for hepatitis B virus gene transcription and DNA replication. Mechanistically, synergistically cooperates with HNF1A to up-regulate the activity of one of the critical cis-elements in the hepatitis B virus genome enhancer II (ENII). The chain is Nuclear receptor subfamily 5 group A member 2 from Homo sapiens (Human).